A 172-amino-acid chain; its full sequence is Trypsin inhibitor DE-3 (172 aa).

2 cysteine pairs are disulfide-bonded: Cys-39/Cys-83 and Cys-132/Cys-139.

The protein belongs to the protease inhibitor I3 (leguminous Kunitz-type inhibitor) family.

In terms of biological role, inhibition of trypsin. The polypeptide is Trypsin inhibitor DE-3 (Erythrina variegata (Indian coral tree)).